Here is a 451-residue protein sequence, read N- to C-terminus: Probable D-serine dehydratase (451 aa).

An N6-(pyridoxal phosphate)lysine modification is found at Lys119.

It belongs to the serine/threonine dehydratase family. DsdA subfamily. The cofactor is pyridoxal 5'-phosphate.

It catalyses the reaction D-serine = pyruvate + NH4(+). The sequence is that of Probable D-serine dehydratase from Acidovorax ebreus (strain TPSY) (Diaphorobacter sp. (strain TPSY)).